The primary structure comprises 648 residues: 60 kDa heat shock protein homolog 1, mitochondrial (648 aa).

The N-terminal 55 residues, Met-1–Ser-55, are a transit peptide targeting the mitochondrion.

The protein belongs to the chaperonin (HSP60) family.

Its subcellular location is the mitochondrion matrix. Its function is as follows. Prevents misfolding and promotes the refolding and proper assembly of unfolded polypeptides generated under stress conditions. This Drosophila melanogaster (Fruit fly) protein is 60 kDa heat shock protein homolog 1, mitochondrial (Hsp60B).